We begin with the raw amino-acid sequence, 30 residues long: V-type proton ATPase catalytic subunit A isoform 2 (30 aa).

The protein belongs to the ATPase alpha/beta chains family. In terms of assembly, V-ATPase is a heteromultimeric enzyme composed of a peripheral catalytic V1 complex (main components: subunits A, B, C, D, E, and F) attached to an integral membrane V0 proton pore complex (main component: the proteolipid protein).

The enzyme catalyses ATP + H2O + 4 H(+)(in) = ADP + phosphate + 5 H(+)(out). Its function is as follows. Catalytic subunit of the peripheral V1 complex of vacuolar ATPase. V-ATPase vacuolar ATPase is responsible for acidifying a variety of intracellular compartments in eukaryotic cells. In Equisetum arvense (Field horsetail), this protein is V-type proton ATPase catalytic subunit A isoform 2.